The following is a 541-amino-acid chain: Arginine--tRNA ligase (541 aa).

Positions 119–129 match the 'HIGH' region motif; it reads ANPTGPLHIGH.

It belongs to the class-I aminoacyl-tRNA synthetase family. As to quaternary structure, monomer.

It is found in the cytoplasm. The catalysed reaction is tRNA(Arg) + L-arginine + ATP = L-arginyl-tRNA(Arg) + AMP + diphosphate. This Helicobacter pylori (strain ATCC 700392 / 26695) (Campylobacter pylori) protein is Arginine--tRNA ligase (argS).